The following is a 92-amino-acid chain: Small ribosomal subunit protein uS17 (92 aa).

Belongs to the universal ribosomal protein uS17 family. In terms of assembly, part of the 30S ribosomal subunit.

Its function is as follows. One of the primary rRNA binding proteins, it binds specifically to the 5'-end of 16S ribosomal RNA. The protein is Small ribosomal subunit protein uS17 of Cupriavidus metallidurans (strain ATCC 43123 / DSM 2839 / NBRC 102507 / CH34) (Ralstonia metallidurans).